The primary structure comprises 348 residues: Dihydroorotate dehydrogenase (quinone) (348 aa).

FMN contacts are provided by residues 60-64 (AGFDK) and T84. A substrate-binding site is contributed by K64. 109-113 (NRLGF) contributes to the substrate binding site. Positions 138 and 169 each coordinate FMN. Substrate is bound at residue N169. The active-site Nucleophile is S172. Residue N174 participates in substrate binding. The FMN site is built by K207 and S235. 236 to 237 (NT) is a binding site for substrate. FMN is bound by residues G258, G287, and 308 to 309 (YS).

Belongs to the dihydroorotate dehydrogenase family. Type 2 subfamily. In terms of assembly, monomer. The cofactor is FMN.

It is found in the cell membrane. It carries out the reaction (S)-dihydroorotate + a quinone = orotate + a quinol. The protein operates within pyrimidine metabolism; UMP biosynthesis via de novo pathway; orotate from (S)-dihydroorotate (quinone route): step 1/1. Its function is as follows. Catalyzes the conversion of dihydroorotate to orotate with quinone as electron acceptor. This is Dihydroorotate dehydrogenase (quinone) from Parvibaculum lavamentivorans (strain DS-1 / DSM 13023 / NCIMB 13966).